We begin with the raw amino-acid sequence, 247 residues long: Sugar fermentation stimulation protein homolog (247 aa).

This sequence belongs to the SfsA family.

This chain is Sugar fermentation stimulation protein homolog, found in Aeromonas hydrophila subsp. hydrophila (strain ATCC 7966 / DSM 30187 / BCRC 13018 / CCUG 14551 / JCM 1027 / KCTC 2358 / NCIMB 9240 / NCTC 8049).